The sequence spans 141 residues: Large ribosomal subunit protein uL11 (141 aa).

It belongs to the universal ribosomal protein uL11 family. As to quaternary structure, part of the ribosomal stalk of the 50S ribosomal subunit. Interacts with L10 and the large rRNA to form the base of the stalk. L10 forms an elongated spine to which L12 dimers bind in a sequential fashion forming a multimeric L10(L12)X complex. One or more lysine residues are methylated.

In terms of biological role, forms part of the ribosomal stalk which helps the ribosome interact with GTP-bound translation factors. The chain is Large ribosomal subunit protein uL11 from Pseudothermotoga lettingae (strain ATCC BAA-301 / DSM 14385 / NBRC 107922 / TMO) (Thermotoga lettingae).